We begin with the raw amino-acid sequence, 111 residues long: Ferredoxin-thioredoxin reductase, catalytic chain (111 aa).

Cysteine 52 provides a ligand contact to [4Fe-4S] cluster. The active-site Nucleophile is cysteine 54. Cysteine 54 and cysteine 84 are joined by a disulfide. The [4Fe-4S] cluster site is built by cysteine 71, cysteine 73, and cysteine 82.

It belongs to the ferredoxin thioredoxin reductase beta subunit family. Heterodimer of subunit A (variable subunit) and subunit B (catalytic subunit). Heterodimeric FTR forms a complex with ferredoxin and thioredoxin. The cofactor is [4Fe-4S] cluster.

The protein localises to the plastid. It is found in the chloroplast. It catalyses the reaction [thioredoxin]-disulfide + 2 reduced [2Fe-2S]-[ferredoxin] + 2 H(+) = [thioredoxin]-dithiol + 2 oxidized [2Fe-2S]-[ferredoxin]. In terms of biological role, catalytic subunit of the ferredoxin-thioredoxin reductase (FTR), which catalyzes the two-electron reduction of thioredoxins by the electrons provided by reduced ferredoxin. The polypeptide is Ferredoxin-thioredoxin reductase, catalytic chain (ftrB) (Cyanidium caldarium (Red alga)).